Consider the following 331-residue polypeptide: ADP-L-glycero-D-manno-heptose-6-epimerase (331 aa).

NADP(+) contacts are provided by residues F11 to I12, D32 to N33, K39, K54, E75 to S79, and N92. Y139 functions as the Proton acceptor in the catalytic mechanism. K143 is a binding site for NADP(+). N168 is a substrate binding site. Residues V169 and K177 each coordinate NADP(+). The active-site Proton acceptor is the K177. Residues R179, H186, F200–Y203, R213, and Y292 each bind substrate.

The protein belongs to the NAD(P)-dependent epimerase/dehydratase family. HldD subfamily. In terms of assembly, homopentamer. Requires NADP(+) as cofactor.

The enzyme catalyses ADP-D-glycero-beta-D-manno-heptose = ADP-L-glycero-beta-D-manno-heptose. Its pathway is nucleotide-sugar biosynthesis; ADP-L-glycero-beta-D-manno-heptose biosynthesis; ADP-L-glycero-beta-D-manno-heptose from D-glycero-beta-D-manno-heptose 7-phosphate: step 4/4. In terms of biological role, catalyzes the interconversion between ADP-D-glycero-beta-D-manno-heptose and ADP-L-glycero-beta-D-manno-heptose via an epimerization at carbon 6 of the heptose. The protein is ADP-L-glycero-D-manno-heptose-6-epimerase of Cupriavidus metallidurans (strain ATCC 43123 / DSM 2839 / NBRC 102507 / CH34) (Ralstonia metallidurans).